Reading from the N-terminus, the 280-residue chain is Large ribosomal subunit protein uL2 (280 aa).

Disordered stretches follow at residues 27 to 58 (STPE…GGGH) and 226 to 280 (MNPV…KHGR). Composition is skewed to basic residues over residues 37 to 58 (LHGH…GGGH) and 268 to 280 (IVRR…KHGR).

It belongs to the universal ribosomal protein uL2 family. Part of the 50S ribosomal subunit. Forms a bridge to the 30S subunit in the 70S ribosome.

Functionally, one of the primary rRNA binding proteins. Required for association of the 30S and 50S subunits to form the 70S ribosome, for tRNA binding and peptide bond formation. It has been suggested to have peptidyltransferase activity; this is somewhat controversial. Makes several contacts with the 16S rRNA in the 70S ribosome. The polypeptide is Large ribosomal subunit protein uL2 (Mycobacterium ulcerans (strain Agy99)).